We begin with the raw amino-acid sequence, 189 residues long: Peptidyl-tRNA hydrolase (189 aa).

Residue Y16 participates in tRNA binding. H21 (proton acceptor) is an active-site residue. TRNA-binding residues include F67, N69, and N115.

This sequence belongs to the PTH family. Monomer.

Its subcellular location is the cytoplasm. The catalysed reaction is an N-acyl-L-alpha-aminoacyl-tRNA + H2O = an N-acyl-L-amino acid + a tRNA + H(+). Hydrolyzes ribosome-free peptidyl-tRNAs (with 1 or more amino acids incorporated), which drop off the ribosome during protein synthesis, or as a result of ribosome stalling. Functionally, catalyzes the release of premature peptidyl moieties from peptidyl-tRNA molecules trapped in stalled 50S ribosomal subunits, and thus maintains levels of free tRNAs and 50S ribosomes. This is Peptidyl-tRNA hydrolase from Legionella pneumophila (strain Lens).